A 430-amino-acid polypeptide reads, in one-letter code: PCI domain-containing protein 2 homolog (430 aa).

One can recognise a PCI domain in the interval 243-424; the sequence is ITYRFFNGRL…ALVVSPTNPF (182 aa).

Belongs to the CSN12 family.

The sequence is that of PCI domain-containing protein 2 homolog (pcid2) from Dictyostelium discoideum (Social amoeba).